The primary structure comprises 98 residues: DNA-binding protein Fis (98 aa).

The H-T-H motif DNA-binding region spans 74-93 (QTRAATMLGINRGTLRKKLK).

It belongs to the transcriptional regulatory Fis family. In terms of assembly, homodimer.

Its function is as follows. Activates ribosomal RNA transcription. Plays a direct role in upstream activation of rRNA promoters. The chain is DNA-binding protein Fis from Histophilus somni (strain 2336) (Haemophilus somnus).